The primary structure comprises 179 residues: Large ribosomal subunit protein uL5 (179 aa).

It belongs to the universal ribosomal protein uL5 family. As to quaternary structure, part of the 50S ribosomal subunit; part of the 5S rRNA/L5/L18/L25 subcomplex. Contacts the 5S rRNA and the P site tRNA. Forms a bridge to the 30S subunit in the 70S ribosome.

Functionally, this is one of the proteins that bind and probably mediate the attachment of the 5S RNA into the large ribosomal subunit, where it forms part of the central protuberance. In the 70S ribosome it contacts protein S13 of the 30S subunit (bridge B1b), connecting the 2 subunits; this bridge is implicated in subunit movement. Contacts the P site tRNA; the 5S rRNA and some of its associated proteins might help stabilize positioning of ribosome-bound tRNAs. The chain is Large ribosomal subunit protein uL5 from Pseudomonas fluorescens (strain SBW25).